Consider the following 288-residue polypeptide: MKIAIIQYSTYGHITQLAKAVQKGVADAGYKADIFQVPETLPQEVLDKMHAPAKPTDIPIATNDTLTEYDAFLFGVPTRYGTAPAQFFEFWGATGGLWANGSLAGKPAGVFVSTSGQGGGQETTVRNFLNFLAHHGMPYIPLGYANAFALQSSMEEVHGGSPYGAGTFANVDGSRQPSTLELEIAEKQGEAFVKSATKLVKGSKKTNTTTTSKSAATSDAAGTTSGTAAGTSAATGAATGTSAPKESTKEASSSAKKEATNGTATRTQQSTKAPETAEKSSCSKCIIM.

A Flavodoxin-like domain is found at 3 to 192 (IAIIQYSTYG…EIAEKQGEAF (190 aa)). FMN is bound by residues 9-13 (STYGH) and 110-164 (VFVS…SPYG). Residues 202 to 288 (GSKKTNTTTT…KSSCSKCIIM (87 aa)) are disordered. The segment covering 205-254 (KTNTTTTSKSAATSDAAGTTSGTAAGTSAATGAATGTSAPKESTKEASSS) has biased composition (low complexity). A compositionally biased stretch (polar residues) spans 261 to 288 (NGTATRTQQSTKAPETAEKSSCSKCIIM).

Belongs to the WrbA family. Requires FMN as cofactor.

It is found in the cell membrane. It carries out the reaction a quinone + NADH + H(+) = a quinol + NAD(+). The catalysed reaction is a quinone + NADPH + H(+) = a quinol + NADP(+). Flavodoxin-like protein (FLP) that plays a role in cell wall integrity, oxidative stress protection and virulence. FLPs act as NAD(P)H quinone oxidoreductases. Reduces ubiquinone (coenzyme Q), enabling it to serve as an antioxidant in the membrane. In Candida albicans (strain SC5314 / ATCC MYA-2876) (Yeast), this protein is NAD(P)H quinone oxidoreductase YCP4.